We begin with the raw amino-acid sequence, 347 residues long: Probable zinc transporter 8 (347 aa).

Residues 1–27 (MATTTQHMNQIFLVLLLISFAISPAIS) form the signal peptide. The Extracellular segment spans residues 28 to 51 (TVPKECETDSTDSCIDKTKALPLK). A helical transmembrane segment spans residues 52–72 (IVAIVAILVTSMIGVAAPLFS). The Cytoplasmic segment spans residues 73-83 (RYVTFLHPDGK). The chain crosses the membrane as a helical span at residues 84–104 (IFMIIKCFASGIILGTGFMHV). Topologically, residues 105–124 (LPDSFEMLSSPCLEDNPWHK) are extracellular. A helical transmembrane segment spans residues 125-145 (FPFTGFVAMLSGLVTLAIDSI). At 146 to 192 (ATSLYTKKAVADDSEERTTPMIIQIDHLPLTTKERSSTCSKQLLRYR) the chain is on the cytoplasmic side. The helical transmembrane segment at 193–213 (VIATVLELGIIVHSVVIGLSL) threads the bilayer. The Extracellular segment spans residues 214-224 (GATNDTCTIKG). A helical membrane pass occupies residues 225-245 (LIAALCFHQMFEGMGLGGCIL). The Cytoplasmic portion of the chain corresponds to 246 to 254 (QAEYTNVKK). The helical transmembrane segment at 255–275 (FVMAFFFAVTTPSGIALGIAL) threads the bilayer. At 276-286 (SSVYKDNSPTA) the chain is on the extracellular side. A helical membrane pass occupies residues 287 to 307 (LITVGLLNACSAGLLIYMALV). The Cytoplasmic segment spans residues 308–326 (DLLAAEFMGSMLQRSVKLQ). Residues 327–347 (LNCFGAALLGCGGMSVLAKWA) form a helical membrane-spanning segment.

This sequence belongs to the ZIP transporter (TC 2.A.5) family.

Its subcellular location is the cell membrane. In terms of biological role, probably mediates zinc uptake from the rhizosphere. The sequence is that of Probable zinc transporter 8 (ZIP8) from Arabidopsis thaliana (Mouse-ear cress).